The following is a 286-amino-acid chain: Phosphate import ATP-binding protein PstB (286 aa).

The 242-residue stretch at 40 to 281 (VVARDFSIYY…PKDSMTEDYI (242 aa)) folds into the ABC transporter domain. Position 72 to 79 (72 to 79 (GPSGCGKS)) interacts with ATP.

The protein belongs to the ABC transporter superfamily. Phosphate importer (TC 3.A.1.7) family. The complex is composed of two ATP-binding proteins (PstB), two transmembrane proteins (PstC and PstA) and a solute-binding protein (PstS).

It is found in the cell inner membrane. The enzyme catalyses phosphate(out) + ATP + H2O = ADP + 2 phosphate(in) + H(+). In terms of biological role, part of the ABC transporter complex PstSACB involved in phosphate import. Responsible for energy coupling to the transport system. In Chlorobaculum tepidum (strain ATCC 49652 / DSM 12025 / NBRC 103806 / TLS) (Chlorobium tepidum), this protein is Phosphate import ATP-binding protein PstB.